An 863-amino-acid chain; its full sequence is MEAIYNPQAIEATVQKFWTDNNTFQAIENPDKEKFYCLAMFPYPSGRLHMGHVRNYSLGDVISRYQRMQGKNVMQPMGWDAFGLPAENAAIKNKTAPGKWTYENIDYMRNQLQSLGFGYDWGRELATCKPDYYRWEQWFFTQLFEKGLVYKKNATVNWDPVDQTVLANEQVIDGRGWRSGALVERKQIPQWFIKITDYAEELLDDLDQLTEWPEQVKTMQRNWIGRSQGVEMTFAVADSTESFDIYTTRPDTLMGVTYVALAAQHPLAVAAAVDNADLAAFIDECKNSKTTEADMAAMEKKGVDTGLKAIHPLTGKLVPVWAANFVLMDYGSGAVMSVPGHDQRDYEFALKYGLAIEQVIAGQEADDINKAAITEKSTLINSGEFDGLDFEEAFKAISDKLISENKGKTTTNYRLRDWGVSRQRYWGTPIPMINLANGESVPVPTNELPVVLPEDVVMNGTTSPIKADPEWAKTLYNGEEALRETDTFDTFMESSWYYARYCSPNDDTQMIDPAKANYWLPVDQYIGGIEHAILHLLYSRFFHKLLRDVGLVKCDEPFKKLLCQGMVLAETYYREADNGAQEWIAPTDVEVERDEKGQITSSISKIDGQPVLSAGMSKMSKSKNNGIDPQEVIEKYGADTVRLFIMFTSPPEQTLEWSDAGVEGAHRFVKRVYKLAHEFVESTNNSAVVDIAELTLNADHKKLRRELHKTIAKVTDDIGRRNTFNTAIAAIMELMNHLGKAKVNSDEDKAVMQEAVRAVVLMLTPITPHLCHHLWQLVGGSDENVEDASWPVVDNSALVEDEKLIIVQVNGKVRAKITVAADASKEDVEALGLNDESVLKFTDGNTIRKVIYIPGKLLNIVAN.

The short motif at 42 to 52 (PYPSGRLHMGH) is the 'HIGH' region element. The short motif at 618-622 (KMSKS) is the 'KMSKS' region element. ATP is bound at residue Lys-621.

This sequence belongs to the class-I aminoacyl-tRNA synthetase family.

It localises to the cytoplasm. The enzyme catalyses tRNA(Leu) + L-leucine + ATP = L-leucyl-tRNA(Leu) + AMP + diphosphate. This chain is Leucine--tRNA ligase, found in Colwellia psychrerythraea (strain 34H / ATCC BAA-681) (Vibrio psychroerythus).